Reading from the N-terminus, the 311-residue chain is MPINIPKNLPAGEHLREEKIFVMEEDRARTQQIRPLNILILNLMPEKEKTELQLLRLLGNTPLQVNITFLNTATHESKNVSKSHLQLFYTTFNQIRHRRYDGMIITGAPVEKMPFEEVNYWQEIAEIMDWSKKNVTSVLHICWGAQAALYHHYGIGKIELSAKCSGVYSHVITDLTVDLVRGFSDLFTAPHSRYTSVSIDEVRNHPDLRLLSYSEDAGVFIVQSKDNKNIMITGHLEYDATTLADEYSRDVAKGIDINVPVNYFPNDDPEKEPMNTWRAHTHLLFSNWLNYYVYQETPYEWDFVDEIEYHI.

C142 (acyl-thioester intermediate) is an active-site residue. Substrate is bound by residues K163 and S192. The active-site Proton acceptor is the H235. Residue E237 is part of the active site. R249 lines the substrate pocket.

Belongs to the MetA family.

The protein localises to the cytoplasm. The enzyme catalyses L-homoserine + acetyl-CoA = O-acetyl-L-homoserine + CoA. The protein operates within amino-acid biosynthesis; L-methionine biosynthesis via de novo pathway; O-acetyl-L-homoserine from L-homoserine: step 1/1. Transfers an acetyl group from acetyl-CoA to L-homoserine, forming acetyl-L-homoserine. The polypeptide is Homoserine O-acetyltransferase (Lysinibacillus sphaericus (strain C3-41)).